Consider the following 203-residue polypeptide: Cardiotrophin-1 (203 aa).

The protein belongs to the IL-6 superfamily. In terms of tissue distribution, highly expressed in heart, skeletal muscle, liver, lung and kidney. Lower levels in testis and brain. No expression in spleen.

It localises to the secreted. Induces cardiac myocyte hypertrophy in vitro. Binds to and activates the ILST/gp130 receptor. The polypeptide is Cardiotrophin-1 (Ctf1) (Mus musculus (Mouse)).